The sequence spans 509 residues: Bifunctional purine biosynthesis protein PurH (509 aa).

An MGS-like domain is found at 1–145; the sequence is MIKRALISVF…KSFKDVVVIS (145 aa).

Belongs to the PurH family.

It catalyses the reaction (6R)-10-formyltetrahydrofolate + 5-amino-1-(5-phospho-beta-D-ribosyl)imidazole-4-carboxamide = 5-formamido-1-(5-phospho-D-ribosyl)imidazole-4-carboxamide + (6S)-5,6,7,8-tetrahydrofolate. The enzyme catalyses IMP + H2O = 5-formamido-1-(5-phospho-D-ribosyl)imidazole-4-carboxamide. Its pathway is purine metabolism; IMP biosynthesis via de novo pathway; 5-formamido-1-(5-phospho-D-ribosyl)imidazole-4-carboxamide from 5-amino-1-(5-phospho-D-ribosyl)imidazole-4-carboxamide (10-formyl THF route): step 1/1. The protein operates within purine metabolism; IMP biosynthesis via de novo pathway; IMP from 5-formamido-1-(5-phospho-D-ribosyl)imidazole-4-carboxamide: step 1/1. In Brachyspira hyodysenteriae (strain ATCC 49526 / WA1), this protein is Bifunctional purine biosynthesis protein PurH.